The chain runs to 193 residues: Peptide deformylase (193 aa).

Fe cation contacts are provided by cysteine 111 and histidine 155. Glutamate 156 is a catalytic residue. Residue histidine 159 participates in Fe cation binding.

Belongs to the polypeptide deformylase family. It depends on Fe(2+) as a cofactor.

It carries out the reaction N-terminal N-formyl-L-methionyl-[peptide] + H2O = N-terminal L-methionyl-[peptide] + formate. Its function is as follows. Removes the formyl group from the N-terminal Met of newly synthesized proteins. Requires at least a dipeptide for an efficient rate of reaction. N-terminal L-methionine is a prerequisite for activity but the enzyme has broad specificity at other positions. This chain is Peptide deformylase, found in Mycoplasma genitalium (strain ATCC 33530 / DSM 19775 / NCTC 10195 / G37) (Mycoplasmoides genitalium).